Here is a 114-residue protein sequence, read N- to C-terminus: Dolichyl-diphosphooligosaccharide--protein glycosyltransferase subunit DAD1 (114 aa).

At 1 to 30 (MPKAAGDAKLLIQSLNKAYAATPTNLKIID) the chain is on the cytoplasmic side. Residues 31 to 51 (LYVVFAVVTALLQVVYMGIVG) form a helical membrane-spanning segment. Serine 52 is a topological domain (lumenal). Residues 53-73 (FPFNSFLSGVLSCIGTAVLAV) form a helical membrane-spanning segment. The Cytoplasmic segment spans residues 74–93 (CHRIQVNKDNKEFKDLAPER). The chain crosses the membrane as a helical span at residues 94 to 114 (AFADFVLCSLVLHLVIMNFLG).

The protein belongs to the DAD/OST2 family. Component of the oligosaccharyltransferase (OST) complex.

The protein resides in the endoplasmic reticulum membrane. It functions in the pathway protein modification; protein glycosylation. Functionally, subunit of the oligosaccharyl transferase (OST) complex that catalyzes the initial transfer of a defined glycan (Glc(3)Man(9)GlcNAc(2) in eukaryotes) from the lipid carrier dolichol-pyrophosphate to an asparagine residue within an Asn-X-Ser/Thr consensus motif in nascent polypeptide chains, the first step in protein N-glycosylation. N-glycosylation occurs cotranslationally and the complex associates with the Sec61 complex at the channel-forming translocon complex that mediates protein translocation across the endoplasmic reticulum (ER). All subunits are required for a maximal enzyme activity. The sequence is that of Dolichyl-diphosphooligosaccharide--protein glycosyltransferase subunit DAD1 (DAD1) from Hordeum vulgare (Barley).